We begin with the raw amino-acid sequence, 325 residues long: APIKGYSVTVXLYIFDCQKWSSNYPHKPNFSDATDPKGPWCYTTDYXGAASVTRSGLRGDEQTPHRHTFSPQSFAGLTTACVKGTGEGYRGTAALTVSGKACQAWASQTPGDVYSCQGLVSNYCRNPDGEKLPWCYTTEYCNVPSCTGGPTGSEYHEILTPAQDXYTGIVEDYRGKMSPDAGLEENFCRNPDQDPQGPWCYTXNPEAXPRYCDVLSVVGGXEAQRNSXPRQISLQYGWQTVHVQSIHAEPRGVDIALVKIAPPAQLTACVITXWGETQGTGEDVQFCAGYPEGGTDPVSLVCLEPCVLAPVLVGVVILPXNDRXQ.

Kringle domains are found at residues 80–146 (ACVK…VPSC) and 159–217 (LTPA…VLSV). 4 disulfides stabilise this stretch: Cys-81/Cys-146, Cys-102/Cys-135, Cys-124/Cys-141, and Cys-188/Cys-212.

The protein belongs to the peptidase S1 family. Plasminogen subfamily.

The protein resides in the secreted. It catalyses the reaction Preferential cleavage: Lys-|-Xaa &gt; Arg-|-Xaa, higher selectivity than trypsin. Converts fibrin into soluble products.. In terms of biological role, plasmin dissolves the fibrin of blood clots and acts as a proteolytic factor in a variety of other processes including embryonic development, tissue remodeling, tumor invasion, and inflammation. In Petromyzon marinus (Sea lamprey), this protein is Plasminogen.